A 119-amino-acid polypeptide reads, in one-letter code: Small ribosomal subunit protein bS16 (119 aa).

Belongs to the bacterial ribosomal protein bS16 family.

The chain is Small ribosomal subunit protein bS16 from Chlamydia caviae (strain ATCC VR-813 / DSM 19441 / 03DC25 / GPIC) (Chlamydophila caviae).